The primary structure comprises 196 residues: Mitochondrial inner membrane protein SHH3 (196 aa).

The N-terminal 53 residues, Met1–Lys53, are a transit peptide targeting the mitochondrion. The Mitochondrial matrix portion of the chain corresponds to Ser54–Ser97. The a ubiquinone site is built by Ser91 and Arg95. A helical membrane pass occupies residues Gly98–Met118. At Gly119 to Lys137 the chain is on the mitochondrial intermembrane side. The helical transmembrane segment at Trp138–Arg160 threads the bilayer. Heme is bound at residue His154. Residues His161–Gly174 are Mitochondrial matrix-facing. Residues Val175–Ala195 traverse the membrane as a helical segment. Position 196 (Gln196) is a topological domain, mitochondrial intermembrane.

Belongs to the cytochrome b560 family.

The protein resides in the mitochondrion inner membrane. Its function is as follows. Homolog of SDH3, but seems not to be a stoichiometric subunit of either the succinate dehydrogenase (SDH) complex or the mitochondrial inner membrane translocase TIM22 complex. In Saccharomyces cerevisiae (strain ATCC 204508 / S288c) (Baker's yeast), this protein is Mitochondrial inner membrane protein SHH3.